A 664-amino-acid polypeptide reads, in one-letter code: Protein LYK5 (664 aa).

The signal sequence occupies residues 1–26 (MAACTLHALSVTLFLLLFFAVSPAKA). The Extracellular segment spans residues 27–277 (QQPYVNNHQL…DPPGSSSSHK (251 aa)). N-linked (GlcNAc...) asparagine glycosylation is found at asparagine 45, asparagine 81, asparagine 111, asparagine 125, and asparagine 129. Intrachain disulfides connect cysteine 52/cysteine 114, cysteine 58/cysteine 181, and cysteine 112/cysteine 179. Position 135–141 (135–141 (GDETYFS)) interacts with chitin. N-linked (GlcNAc...) asparagine glycosylation occurs at asparagine 144. 164–170 (ERQLTPG) contributes to the chitin binding site. The LysM domain maps to 195–238 (LTYLVAMGDSISGIAEMFNSTSAAITEGNELTSDNIFFFTPVLV). The N-linked (GlcNAc...) asparagine glycan is linked to asparagine 213. The segment covering 251-269 (PSPPPPPVVATPPQTPVDP) has biased composition (pro residues). Positions 251–270 (PSPPPPPVVATPPQTPVDPP) are disordered. The chain crosses the membrane as a helical span at residues 278 to 298 (WIYIGIGIGAGLLLLLSILAL). Topologically, residues 299–664 (CFYKRRSKKK…DLLRSGSLGN (366 aa)) are cytoplasmic. Residues 351 to 643 (KSAIESLTLY…TQVLTTLSMI (293 aa)) enclose the Protein kinase domain. ATP contacts are provided by residues 357-365 (LTLYRFNDL) and lysine 395.

The protein belongs to the protein kinase superfamily. Ser/Thr protein kinase family.

It is found in the cell membrane. Its function is as follows. May recognize microbe-derived N-acetylglucosamine (NAG)-containing ligands. This Arabidopsis thaliana (Mouse-ear cress) protein is Protein LYK5 (LYK5).